The following is a 112-amino-acid chain: MTESEFLKQAEATLDQIEATLEELANTSDLDVECTRSGNVLEIEFIDNGTKIIVNSQAPMQELWVAAKSGGFHFKAQGEQWMNTRDATELFAALSQMVSQQGGVEVVLRDAG.

Belongs to the frataxin family.

Its function is as follows. Involved in iron-sulfur (Fe-S) cluster assembly. May act as a regulator of Fe-S biogenesis. The protein is Iron-sulfur cluster assembly protein CyaY of Herminiimonas arsenicoxydans.